Here is a 625-residue protein sequence, read N- to C-terminus: Prothrombin (625 aa).

Residues 1-24 (MARVRGPRLPGCLALAALFSLVHS) form the signal peptide. The propeptide occupies 25-43 (QHVFLAHQQASSLLQRARR). Residues 44–90 (ANKGFLEEVRKGNLERECLEEPCSREEAFEALESLSATDAFWAKYTA) form the Gla domain. 10 positions are modified to 4-carboxyglutamate: Glu50, Glu51, Glu58, Glu60, Glu63, Glu64, Glu69, Glu70, Glu73, and Glu76. The cysteines at positions 61 and 66 are disulfide-linked. Cystine bridges form between Cys91–Cys104, Cys109–Cys187, Cys130–Cys170, Cys158–Cys182, Cys214–Cys292, Cys235–Cys275, Cys263–Cys287, Cys339–Cys485, Cys394–Cys410, Cys539–Cys553, and Cys567–Cys597. Kringle domains lie at 109–187 (CAEG…VPVC) and 214–292 (CVPD…LNYC). N-linked (GlcNAc...) asparagine glycans are attached at residues Asn120 and Asn144. The region spanning 367–621 (IVEGQDAEVG…LKKWIQKVID (255 aa)) is the Peptidase S1 domain. His409 functions as the Charge relay system in the catalytic mechanism. N-linked (GlcNAc...) asparagine glycosylation is present at Asn419. Asp465 acts as the Charge relay system in catalysis. The tract at residues 554-576 (AGYKPGEGKRGDACEGDSGGPFV) is high affinity receptor-binding region which is also known as the TP508 peptide. The active-site Charge relay system is the Ser571.

Belongs to the peptidase S1 family. Heterodimer (named alpha-thrombin) of a light and a heavy chain; disulfide-linked. Forms a heterodimer with SERPINA5. In plasma, interacts (via N-terminus) with alpha-1-microglobulin; this interaction does not prevent the activation of prothrombin to thrombin. The gamma-carboxyglutamyl residues, which bind calcium ions, result from the carboxylation of glutamyl residues by a microsomal enzyme, the vitamin K-dependent carboxylase. The modified residues are necessary for the calcium-dependent interaction with a negatively charged phospholipid surface, which is essential for the conversion of prothrombin to thrombin. In terms of processing, in the penultimate step of the coagulation cascade, prothrombin is converted to thrombin by the prothrombinase complex composed of factor Xa (F10), cofactor Va (F5), and phospholipids. This activation requires factor Xa-catalyzed sequential cleavage at 2 sites, Arg-317 and Arg-366, along 2 possible pathways. In the first pathway, the first cleavage occurs at Arg-317, leading to the formation of the inactive intermediate prethrombin-2. This pathway preferentially occurs on platelets and in the absence of cofactor Va. In the second pathway, the first cleavage occurs at Arg-366, which separates protease domain into 2 chains that remain connected through a disulfide bond and generates the active intermediate meizothrombin. The presence of cofactor Va directs activation along the meizothrombin pathway and greatly accelerates the rate of cleavage at Arg-366, but has a smaller effect on the cleavage of meizothrombin at Arg-317. Meizothrombin accumulates as an intermediate when prothrombinase is assembled on the membrane of red blood cells. As to expression, expressed by the liver and secreted in plasma.

It is found in the secreted. The protein resides in the extracellular space. It carries out the reaction Selective cleavage of Arg-|-Gly bonds in fibrinogen to form fibrin and release fibrinopeptides A and B.. With respect to regulation, activity is promoted in the presence of negatively charged surfaces, such as polyphosphate and dextran sulfate. Inhibited by SERPINA5. Functionally, thrombin, which cleaves bonds after Arg and Lys, converts fibrinogen to fibrin and activates factors V, VII, VIII, XIII, and, in complex with thrombomodulin, protein C. Functions in blood homeostasis, inflammation and wound healing. Activates coagulation factor XI (F11); activation is promoted by the contact with negatively charged surfaces. Triggers the production of pro-inflammatory cytokines, such as MCP-1/CCL2 and IL8/CXCL8, in endothelial cells. This chain is Prothrombin (F2), found in Bos taurus (Bovine).